The chain runs to 602 residues: DNA mismatch repair protein MutL (602 aa).

This sequence belongs to the DNA mismatch repair MutL/HexB family.

This protein is involved in the repair of mismatches in DNA. It is required for dam-dependent methyl-directed DNA mismatch repair. May act as a 'molecular matchmaker', a protein that promotes the formation of a stable complex between two or more DNA-binding proteins in an ATP-dependent manner without itself being part of a final effector complex. The sequence is that of DNA mismatch repair protein MutL from Geotalea uraniireducens (strain Rf4) (Geobacter uraniireducens).